The following is a 255-amino-acid chain: Putative OPA3-like protein CG13603 (255 aa).

Positions 108–154 (KENKKNELAQSEKMELTNMLTEMNFRLERQDAQIREMTRVLADLDSR) form a coiled coil. The interval 168–187 (VPFDPDTPDQSASARNPKKF) is disordered. The stretch at 212 to 241 (DGRNRKAKEALQHLDEVAVQLEQSLGEAAT) forms a coiled coil.

Belongs to the OPA3 family.

This chain is Putative OPA3-like protein CG13603, found in Drosophila melanogaster (Fruit fly).